The chain runs to 1137 residues: Calcium-activated potassium channel subunit alpha-1 (1137 aa).

At 1-44 (MSNNINANNLNTDSSSSPVNVPKMDALIIPVTMEVPCDSRGQRM) the chain is on the extracellular side. A helical transmembrane segment spans residues 45–65 (WWAFLASSMVTFFGGLFIILL). At 66-137 (WRTLKYLWTV…MISAQTLTGR (72 aa)) the chain is on the cytoplasmic side. A helical membrane pass occupies residues 138-158 (VLVVLVFALSIGALVIYFIDS). The Extracellular portion of the chain corresponds to 159-173 (SNPIESCQNFYKDFT). The helical transmembrane segment at 174–194 (LQIDMAFNVFFLLYFGLRFIA) threads the bilayer. The Cytoplasmic segment spans residues 195 to 198 (ANDK). The chain crosses the membrane as a helical span at residues 199-219 (LWFWLEVNSVVDFFTVPPVFV). Residues 220-223 (SVYL) are Extracellular-facing. The chain crosses the membrane as a helical; Voltage-sensor span at residues 224-244 (NRSWLGLRFLRALRLIQFSEI). Over 245–259 (LQFLNILKTSNSIKL) the chain is Cytoplasmic. A helical membrane pass occupies residues 260–280 (VNLCSIFISTWLTAAGFIHLV). Topologically, residues 281–294 (ENSGDPWENFQNNQ) are extracellular. Positions 295 to 317 (QLTYWECVYLLMVTMSTVGYGDV) form an intramembrane region, pore-forming. Positions 311–314 (TVGY) match the Selectivity for potassium motif. Over 318 to 326 (YAKTTLGRL) the chain is Extracellular. Residues 327–347 (FMVFFILGGLAMFASYVPEII) traverse the membrane as a helical segment. Residues 348 to 1137 (ELIGNRKKYG…KQKYVQEDRL (790 aa)) are Cytoplasmic-facing. In terms of domain architecture, RCK N-terminal 1 spans 366–508 (RKHIVVCGHI…WNWKEGDDAI (143 aa)). Mg(2+)-binding residues include E398, Q421, and E423. A segment S7 region spans residues 515–535 (LGFIAQSCLAPGLSTMLANLF). Residues 572–592 (LSFPAVCELVFAKLKLLMIAI) are segment S8. The interval 636–640 (CKACH) is heme-binding motif. A disordered region spans residues 660 to 688 (EQPSTLSPKKKQRNGGMRNSPNSSPKLMR). The segment S9 stretch occupies residues 738–758 (VLSGHVVVCIFGDVKSALIGL). An RCK N-terminal 2 domain is found at 740–884 (SGHVVVCIFG…MDRSSPDNSP (145 aa)). The Calcium bowl signature appears at 904–926 (TELVNDSNVQFLDQDDDDDPDTE). Positions 913, 916, 919, and 921 each coordinate Ca(2+). The tract at residues 933 to 953 (FACGTAFAVSVLDSLMSATYF) is segment S10. Residues 1088–1112 (ASLSHSSHSSYSSSKKSSSVHSIPS) show a composition bias toward low complexity. The interval 1088–1137 (ASLSHSSHSSYSSSKKSSSVHSIPSTANRPNRTKTRDSREKQKYVQEDRL) is disordered. Over residues 1121–1137 (KTRDSREKQKYVQEDRL) the composition is skewed to basic and acidic residues.

Belongs to the potassium channel family. Calcium-activated (TC 1.A.1.3) subfamily. KCa1.1/KCNMA1 sub-subfamily. In terms of assembly, homotetramer; which constitutes the calcium-activated potassium channel.

Its subcellular location is the cell membrane. It catalyses the reaction K(+)(in) = K(+)(out). Ethanol and carbon monoxide-bound heme increase channel activation. Heme inhibits channel activation. Functionally, potassium channel activated by both membrane depolarization or increase in cytosolic Ca(2+) that mediates export of K(+). It is also activated by the concentration of cytosolic Mg(2+). Its activation dampens the excitatory events that elevate the cytosolic Ca(2+) concentration and/or depolarize the cell membrane. It therefore contributes to repolarization of the membrane potential. Plays a key role in controlling excitability in a number of systems, such as regulation of the contraction of smooth muscle, the tuning of hair cells in the cochlea, regulation of transmitter release, and innate immunity. In smooth muscles, its activation by high level of Ca(2+), caused by ryanodine receptors in the sarcoplasmic reticulum, regulates the membrane potential. In cochlea cells, its number and kinetic properties partly determine the characteristic frequency of each hair cell and thereby helps to establish a tonotopic map. Highly sensitive to both iberiotoxin (IbTx) and charybdotoxin (CTX). The sequence is that of Calcium-activated potassium channel subunit alpha-1 (KCNMA1) from Gallus gallus (Chicken).